The primary structure comprises 416 residues: Transcription termination factor Rho (416 aa).

Positions 51-121 constitute a Rho RNA-BD domain; the sequence is LIYSYGELDI…LKLIYVNGEK (71 aa). ATP-binding positions include 162 to 167, 174 to 179, and R205; these read GKGQRG and KAGKTT.

Belongs to the Rho family. In terms of assembly, homohexamer. The homohexamer assembles into an open ring structure.

Functionally, facilitates transcription termination by a mechanism that involves Rho binding to the nascent RNA, activation of Rho's RNA-dependent ATPase activity, and release of the mRNA from the DNA template. This is Transcription termination factor Rho from Streptobacillus moniliformis (strain ATCC 14647 / DSM 12112 / NCTC 10651 / 9901).